Consider the following 505-residue polypeptide: Maturase K (505 aa).

This sequence belongs to the intron maturase 2 family. MatK subfamily.

Its subcellular location is the plastid. It is found in the chloroplast. Functionally, usually encoded in the trnK tRNA gene intron. Probably assists in splicing its own and other chloroplast group II introns. This is Maturase K from Gomphrena haageana (Haage's globe-amaranth).